The following is a 319-amino-acid chain: Putative peptide biosynthesis protein YydG (319 aa).

The 214-residue stretch at 1–214 (MYNKTVSINL…HCPGYDIVYH (214 aa)) folds into the Radical SAM core domain. Residues Cys-14, Cys-18, and Cys-21 each contribute to the [4Fe-4S] cluster site.

It depends on [4Fe-4S] cluster as a cofactor.

Required for production of the modified peptide YydF. May activate a metalloenzyme (Potential). This is Putative peptide biosynthesis protein YydG (yydG) from Bacillus subtilis (strain 168).